Consider the following 432-residue polypeptide: Neuropeptide FF receptor 1 (432 aa).

Residues 1–43 (MEAEPSQPPNGSWPLGQNGSDVETSMATSLTFSSYYQHSSPVA) lie on the Extracellular side of the membrane. Asn10 and Asn18 each carry an N-linked (GlcNAc...) asparagine glycan. A helical membrane pass occupies residues 44–64 (AMFIAAYVLIFLLCMVGNTLV). The Cytoplasmic portion of the chain corresponds to 65–80 (CFIVLKNRHMRTVTNM). A helical transmembrane segment spans residues 81–101 (FILNLAVSDLLVGIFCMPTTL). Residues 102–117 (VDNLITGWPFDNATCK) are Extracellular-facing. An N-linked (GlcNAc...) asparagine glycan is attached at Asn113. Cys116 and Cys203 are joined by a disulfide. The helical transmembrane segment at 118–138 (MSGLVQGMSVSASVFTLVAIA) threads the bilayer. Residues 139 to 158 (VERFRCIVHPFREKLTLRKA) lie on the Cytoplasmic side of the membrane. A helical membrane pass occupies residues 159–179 (LFTIAVIWALALLIMCPSAVT). Over 180 to 214 (LTVTREEHHFMLDARNRSYPLYSCWEAWPEKGMRK) the chain is Extracellular. The N-linked (GlcNAc...) asparagine glycan is linked to Asn195. The chain crosses the membrane as a helical span at residues 215–235 (VYTAVLFAHIYLVPLALIVVM). Topologically, residues 236 to 273 (YVRIARKLCQAPGPARDTEEAVAEGGRTSRRRARVVHM) are cytoplasmic. The chain crosses the membrane as a helical span at residues 274–294 (LVMVALFFTLSWLPLWVLLLL). The Extracellular portion of the chain corresponds to 295 to 309 (IDYGELSELQLHLLS). Residues 310-330 (VYAFPLAHWLAFFHSSANPII) form a helical membrane-spanning segment. Topologically, residues 331 to 432 (YGYFNENFRR…MPLTIPAWNI (102 aa)) are cytoplasmic. A compositionally biased stretch (low complexity) spans 380–406 (PSDSGLPSESGPSSGVPGPGRLPLRNG). Residues 380 to 422 (PSDSGLPSESGPSSGVPGPGRLPLRNGRVAHQDGPGEGPGCNH) form a disordered region.

The protein belongs to the G-protein coupled receptor 1 family. Expressed at high levels in the hypothalamus. Moderate levels found in the midbrain, thalamus, medulla oblongata, testis, eye, whole brain, cerebral cortex, striatum, hippocampus, cerebellum, optic nerve, placenta, spinal cord, pituitary gland and ovary.

It is found in the cell membrane. In terms of biological role, receptor for NPAF (A-18-F-amide) and NPFF (F-8-F-amide) neuropeptides, also known as morphine-modulating peptides. Can also be activated by a variety of naturally occurring or synthetic FMRF-amide like ligands. This receptor mediates its action by association with G proteins that activate a phosphatidylinositol-calcium second messenger system. In Rattus norvegicus (Rat), this protein is Neuropeptide FF receptor 1 (Npffr1).